Reading from the N-terminus, the 330-residue chain is Putative aminopeptidase (330 aa).

The a divalent metal cation site is built by histidine 65 and aspartate 168. Glutamate 198 (proton acceptor) is an active-site residue. A divalent metal cation contacts are provided by glutamate 199, aspartate 221, and histidine 307.

Belongs to the peptidase M42 family. It depends on a divalent metal cation as a cofactor.

The polypeptide is Putative aminopeptidase (celM) (Acetivibrio thermocellus (Hungateiclostridium thermocellum)).